A 409-amino-acid polypeptide reads, in one-letter code: Probable aspartate/prephenate aminotransferase (409 aa).

L-aspartate is bound by residues Gly39, Trp125, and Asn175. An N6-(pyridoxal phosphate)lysine modification is found at Lys239. L-aspartate is bound at residue Arg375.

The protein belongs to the class-I pyridoxal-phosphate-dependent aminotransferase family. In terms of assembly, homodimer. Requires pyridoxal 5'-phosphate as cofactor.

It localises to the cytoplasm. It carries out the reaction L-aspartate + 2-oxoglutarate = oxaloacetate + L-glutamate. It catalyses the reaction L-arogenate + 2-oxoglutarate = prephenate + L-glutamate. Its function is as follows. Catalyzes the reversible conversion of aspartate and 2-oxoglutarate to glutamate and oxaloacetate. Can also transaminate prephenate in the presence of glutamate. This is Probable aspartate/prephenate aminotransferase (aatA) from Rickettsia felis (strain ATCC VR-1525 / URRWXCal2) (Rickettsia azadi).